The chain runs to 39 residues: Photosystem II reaction center protein Y (39 aa).

A helical membrane pass occupies residues 5 to 23 (VLIVLTPLLIAGGWAVFNI).

Belongs to the PsbY family. PSII is composed of 1 copy each of membrane proteins PsbA, PsbB, PsbC, PsbD, PsbE, PsbF, PsbH, PsbI, PsbJ, PsbK, PsbL, PsbM, PsbT, PsbX, PsbY, PsbZ, Psb30/Ycf12, peripheral proteins PsbO, CyanoQ (PsbQ), PsbU, PsbV and a large number of cofactors. It forms dimeric complexes.

Its subcellular location is the cellular thylakoid membrane. Functionally, loosely associated component of the core of photosystem II (PSII), it is not always seen in crystals. PSII is a light-driven water plastoquinone oxidoreductase, using light energy to abstract electrons from H(2)O, generating a proton gradient subsequently used for ATP formation. The sequence is that of Photosystem II reaction center protein Y from Microcystis aeruginosa (strain NIES-843 / IAM M-2473).